A 307-amino-acid polypeptide reads, in one-letter code: Ribonuclease Z (307 aa).

Positions 63, 65, 67, 68, 143, 213, and 271 each coordinate Zn(2+). Asp67 acts as the Proton acceptor in catalysis.

It belongs to the RNase Z family. Homodimer. Zn(2+) serves as cofactor.

It catalyses the reaction Endonucleolytic cleavage of RNA, removing extra 3' nucleotides from tRNA precursor, generating 3' termini of tRNAs. A 3'-hydroxy group is left at the tRNA terminus and a 5'-phosphoryl group is left at the trailer molecule.. Its function is as follows. Zinc phosphodiesterase, which displays some tRNA 3'-processing endonuclease activity. Probably involved in tRNA maturation, by removing a 3'-trailer from precursor tRNA. The polypeptide is Ribonuclease Z (Lactococcus lactis subsp. cremoris (strain SK11)).